The sequence spans 78 residues: MSRVCDLSGTRANNGMAVSHSHIRTKKLQQANLQQRKLWWEEGKKWIKVRVTTRTLKTIQKKGLNSYAKAMGIDLSKV.

The protein belongs to the bacterial ribosomal protein bL28 family.

In Prochlorococcus marinus (strain MIT 9211), this protein is Large ribosomal subunit protein bL28.